The chain runs to 318 residues: Ribonuclease Z (318 aa).

Zn(2+)-binding residues include histidine 62, histidine 64, aspartate 66, histidine 67, histidine 140, aspartate 211, and histidine 269. Aspartate 66 serves as the catalytic Proton acceptor.

The protein belongs to the RNase Z family. As to quaternary structure, homodimer. Requires Zn(2+) as cofactor.

The catalysed reaction is Endonucleolytic cleavage of RNA, removing extra 3' nucleotides from tRNA precursor, generating 3' termini of tRNAs. A 3'-hydroxy group is left at the tRNA terminus and a 5'-phosphoryl group is left at the trailer molecule.. Zinc phosphodiesterase, which displays some tRNA 3'-processing endonuclease activity. Probably involved in tRNA maturation, by removing a 3'-trailer from precursor tRNA. This is Ribonuclease Z from Brevibacillus brevis (strain 47 / JCM 6285 / NBRC 100599).